The chain runs to 314 residues: Olfactory receptor 8U9 (314 aa).

Topologically, residues Met-1–Met-25 are extracellular. N-linked (GlcNAc...) asparagine glycosylation occurs at Asn-5. Residues Pro-26 to Ile-46 traverse the membrane as a helical segment. At Leu-47–Arg-54 the chain is on the cytoplasmic side. The helical transmembrane segment at Leu-55–Ser-75 threads the bilayer. Over Val-76–Ala-99 the chain is Extracellular. The cysteines at positions 97 and 189 are disulfide-linked. The chain crosses the membrane as a helical span at residues Gln-100 to Tyr-120. The Cytoplasmic portion of the chain corresponds to Asp-121 to Met-133. The helical transmembrane segment at Val-134 to Leu-154 threads the bilayer. Over Val-155–Gln-196 the chain is Extracellular. A helical transmembrane segment spans residues Leu-197 to Ser-217. Topologically, residues Tyr-218–Ala-237 are cytoplasmic. The helical transmembrane segment at Phe-238 to Met-258 threads the bilayer. Residues Tyr-259–Asp-271 are Extracellular-facing. An N-linked (GlcNAc...) asparagine glycan is attached at Asn-265. The chain crosses the membrane as a helical span at residues Lys-272–Leu-292. Topologically, residues Arg-293–Ser-314 are cytoplasmic.

It belongs to the G-protein coupled receptor 1 family.

The protein localises to the cell membrane. Functionally, potential odorant receptor. In Mus musculus (Mouse), this protein is Olfactory receptor 8U9.